Here is a 233-residue protein sequence, read N- to C-terminus: MAKISKRINKIREGVDRNKLYDLSAAIGLVKERAVAKFDETVEIAMNLGVDPRHADQMVRGVVNLPNGTGRTVRVAVFARGDKAEEAKKAGADIVGAEELFEIVNGGKIEFDRCIATPDMMPLVGRLGKVLGPRGMMPNPKVGTVTTDVAAAVAASKGGAVEFRVEKAGIIHAGIGKVSFDNAKLEENIKAFADAVIKAKPSAAKGEYVKRVSISSTMGVGVKVDPSTVKVVD.

Belongs to the universal ribosomal protein uL1 family. As to quaternary structure, part of the 50S ribosomal subunit.

Binds directly to 23S rRNA. The L1 stalk is quite mobile in the ribosome, and is involved in E site tRNA release. Functionally, protein L1 is also a translational repressor protein, it controls the translation of the L11 operon by binding to its mRNA. The chain is Large ribosomal subunit protein uL1 from Brucella canis (strain ATCC 23365 / NCTC 10854 / RM-666).